The chain runs to 235 residues: Myb family transcription factor PHL12 (235 aa).

Basic and acidic residues predominate over residues 1–12; it reads MMQSREEIRDDS. The segment at 1 to 20 is disordered; the sequence is MMQSREEIRDDSSSGLVLTT. The HTH myb-type domain maps to 20–80; it reads TDPKPRLRWT…HLQKFRLGKQ (61 aa). A DNA-binding region (H-T-H motif) is located at residues 51–76; that stretch reads PKTIMRVMGVKGLTLYHLKSHLQKFR. Positions 119 to 139 are coiled coil; the sequence is RNMNEMQMEVQRRIEEEVVIE.

It belongs to the MYB-CC family. As to expression, expressed in phloem and/or cambium.

The protein resides in the nucleus. In Arabidopsis thaliana (Mouse-ear cress), this protein is Myb family transcription factor PHL12.